A 152-amino-acid polypeptide reads, in one-letter code: UPF0756 membrane protein PEPE_1090 (152 aa).

Helical transmembrane passes span 4–24, 52–72, 85–105, and 115–135; these read WLFL…SLII, WGVT…KIGF, WIAV…VGFL, and LVMG…GPII.

The protein belongs to the UPF0756 family.

Its subcellular location is the cell membrane. This Pediococcus pentosaceus (strain ATCC 25745 / CCUG 21536 / LMG 10740 / 183-1w) protein is UPF0756 membrane protein PEPE_1090.